The sequence spans 319 residues: tRNA uridine(34) hydroxylase (319 aa).

A Rhodanese domain is found at 124–218 (LDEDTVILDA…YGKNEETKGE (95 aa)). Cys178 functions as the Cysteine persulfide intermediate in the catalytic mechanism.

The protein belongs to the TrhO family.

It catalyses the reaction uridine(34) in tRNA + AH2 + O2 = 5-hydroxyuridine(34) in tRNA + A + H2O. Catalyzes oxygen-dependent 5-hydroxyuridine (ho5U) modification at position 34 in tRNAs. This is tRNA uridine(34) hydroxylase from Listeria monocytogenes serovar 1/2a (strain ATCC BAA-679 / EGD-e).